The following is a 669-amino-acid chain: DNA mismatch repair protein MutL (669 aa).

Residues 356–377 (FEQRQNTENNQEKTFSSEESNS) are disordered. The segment covering 361-377 (NTENNQEKTFSSEESNS) has biased composition (polar residues).

It belongs to the DNA mismatch repair MutL/HexB family.

Its function is as follows. This protein is involved in the repair of mismatches in DNA. It is required for dam-dependent methyl-directed DNA mismatch repair. May act as a 'molecular matchmaker', a protein that promotes the formation of a stable complex between two or more DNA-binding proteins in an ATP-dependent manner without itself being part of a final effector complex. This is DNA mismatch repair protein MutL from Staphylococcus aureus (strain MSSA476).